A 484-amino-acid polypeptide reads, in one-letter code: Glutamate--tRNA ligase (484 aa).

Positions 11–21 match the 'HIGH' region motif; sequence PSPTGYLHIGN. Positions 252-256 match the 'KMSKS' region motif; that stretch reads KLSKR. Lys-255 contributes to the ATP binding site.

It belongs to the class-I aminoacyl-tRNA synthetase family. Glutamate--tRNA ligase type 1 subfamily. In terms of assembly, monomer.

The protein resides in the cytoplasm. The catalysed reaction is tRNA(Glu) + L-glutamate + ATP = L-glutamyl-tRNA(Glu) + AMP + diphosphate. Its function is as follows. Catalyzes the attachment of glutamate to tRNA(Glu) in a two-step reaction: glutamate is first activated by ATP to form Glu-AMP and then transferred to the acceptor end of tRNA(Glu). The protein is Glutamate--tRNA ligase of Staphylococcus aureus (strain Newman).